Here is a 660-residue protein sequence, read N- to C-terminus: Chaperone protein DnaK (660 aa).

At Thr201 the chain carries Phosphothreonine; by autocatalysis. Positions 599–660 (EAMQAQSASA…ADVEIVDKPE (62 aa)) are disordered. Low complexity predominate over residues 600 to 617 (AMQAQSASAAASSAANAQ).

The protein belongs to the heat shock protein 70 family.

Acts as a chaperone. In Chlamydia trachomatis serovar A (strain ATCC VR-571B / DSM 19440 / HAR-13), this protein is Chaperone protein DnaK.